The sequence spans 477 residues: MKNILFVTSECTPFIKTGGLADVSGSLPQALQEHGGMEVRVMLPLYDEIDRSWKDQFEFVCAFTVSLGWREQTAELYRYRYNDVTYYFIGNDYYFTRKGIYGYYDDGERFVFFSQAIIASLEYIDFIPSVLHAHDWQTGIAVALAKIYQPIEELITVFTIHNIYYQGTMPLTTFDDFFQLGREHLAGMEWNQMINSLKSGIFHADKITTVSPTYAEEILTPYYGAGLEEMLWNRREDLIGVLNGIDLKDYNPAIDKSLPVNYRSARSKKIENRKLLYEEIGLNLKDGVPLYIMVTRLVEQKGIHLVQRILEEFLQEDIQLIVLGNGEQEFEYYFKDIEYRYPDKMITHLHFNESLARRLYASADFLLMPSKFEPCGLSQLIALQYKTVPIVRETGGLKDTIIAFNEITGEGNGFRFANYNAHELLHVLKYSLEIYQQPSLWSVLIKNVNKSKFSWKDSASAYADVYQQLDASSVSYK.

Lys-16 provides a ligand contact to ADP-alpha-D-glucose.

This sequence belongs to the glycosyltransferase 1 family. Bacterial/plant glycogen synthase subfamily.

The catalysed reaction is [(1-&gt;4)-alpha-D-glucosyl](n) + ADP-alpha-D-glucose = [(1-&gt;4)-alpha-D-glucosyl](n+1) + ADP + H(+). It functions in the pathway glycan biosynthesis; glycogen biosynthesis. Synthesizes alpha-1,4-glucan chains using ADP-glucose. This is Glycogen synthase from Oceanobacillus iheyensis (strain DSM 14371 / CIP 107618 / JCM 11309 / KCTC 3954 / HTE831).